An 840-amino-acid chain; its full sequence is Leucine--tRNA ligase (840 aa).

A 'HIGH' region motif is present at residues 44–55 (PYPSANGLHVGH). Residues 617 to 621 (KMSKS) carry the 'KMSKS' region motif. K620 is a binding site for ATP.

The protein belongs to the class-I aminoacyl-tRNA synthetase family.

The protein resides in the cytoplasm. It catalyses the reaction tRNA(Leu) + L-leucine + ATP = L-leucyl-tRNA(Leu) + AMP + diphosphate. The chain is Leucine--tRNA ligase from Borreliella burgdorferi (strain ATCC 35210 / DSM 4680 / CIP 102532 / B31) (Borrelia burgdorferi).